A 138-amino-acid chain; its full sequence is Large ribosomal subunit protein uL16 (138 aa).

This sequence belongs to the universal ribosomal protein uL16 family. Part of the 50S ribosomal subunit.

In terms of biological role, binds 23S rRNA and is also seen to make contacts with the A and possibly P site tRNAs. The sequence is that of Large ribosomal subunit protein uL16 from Chlamydia muridarum (strain MoPn / Nigg).